An 827-amino-acid chain; its full sequence is Periplasmic nitrate reductase (827 aa).

A signal peptide (tat-type signal) is located at residues 1–34 (MSLTRRDFIKANAVAATAAAAGIATPAIAQPAKA). A 4Fe-4S Mo/W bis-MGD-type domain is found at 36–92 (IRWDKGVCRFCGTGCAVLVGVQDGRVVATQGDPDSPVNRGLNCIKGYFLSKIMYGED). [4Fe-4S] cluster is bound by residues C43, C46, C50, and C78. Mo-bis(molybdopterin guanine dinucleotide)-binding positions include K80, Q148, N173, C177, 210 to 217 (WGSNMAEM), 241 to 245 (STFEH), 260 to 262 (QTD), M371, Q375, N481, 507 to 508 (SD), K530, D557, and 717 to 726 (TGRVLEHWHS). A substrate-binding site is contributed by F793. The Mo-bis(molybdopterin guanine dinucleotide) site is built by N801 and K818.

It belongs to the prokaryotic molybdopterin-containing oxidoreductase family. NasA/NapA/NarB subfamily. Component of the periplasmic nitrate reductase NapAB complex composed of NapA and NapB. The cofactor is [4Fe-4S] cluster. Mo-bis(molybdopterin guanine dinucleotide) is required as a cofactor. Post-translationally, predicted to be exported by the Tat system. The position of the signal peptide cleavage has not been experimentally proven.

It localises to the periplasm. It catalyses the reaction 2 Fe(II)-[cytochrome] + nitrate + 2 H(+) = 2 Fe(III)-[cytochrome] + nitrite + H2O. Catalytic subunit of the periplasmic nitrate reductase complex NapAB. Receives electrons from NapB and catalyzes the reduction of nitrate to nitrite. The protein is Periplasmic nitrate reductase of Paramagnetospirillum magneticum (strain ATCC 700264 / AMB-1) (Magnetospirillum magneticum).